Here is a 156-residue protein sequence, read N- to C-terminus: ATP synthase subunit b (156 aa).

The helical transmembrane segment at 11-31 (AIAFVLFVIFCMKYVWPPIMA) threads the bilayer.

The protein belongs to the ATPase B chain family. In terms of assembly, F-type ATPases have 2 components, F(1) - the catalytic core - and F(0) - the membrane proton channel. F(1) has five subunits: alpha(3), beta(3), gamma(1), delta(1), epsilon(1). F(0) has three main subunits: a(1), b(2) and c(10-14). The alpha and beta chains form an alternating ring which encloses part of the gamma chain. F(1) is attached to F(0) by a central stalk formed by the gamma and epsilon chains, while a peripheral stalk is formed by the delta and b chains.

Its subcellular location is the cell inner membrane. Its function is as follows. F(1)F(0) ATP synthase produces ATP from ADP in the presence of a proton or sodium gradient. F-type ATPases consist of two structural domains, F(1) containing the extramembraneous catalytic core and F(0) containing the membrane proton channel, linked together by a central stalk and a peripheral stalk. During catalysis, ATP synthesis in the catalytic domain of F(1) is coupled via a rotary mechanism of the central stalk subunits to proton translocation. In terms of biological role, component of the F(0) channel, it forms part of the peripheral stalk, linking F(1) to F(0). This chain is ATP synthase subunit b, found in Yersinia pseudotuberculosis serotype O:1b (strain IP 31758).